We begin with the raw amino-acid sequence, 160 residues long: Surface-adhesin protein E (160 aa).

An N-terminal signal peptide occupies residues 1–15 (MKKIILTLSLGLLTA). Cys16 is lipidated: N-palmitoyl cysteine. Cys16 is lipidated: S-diacylglycerol cysteine.

The protein resides in the cell outer membrane. Its subcellular location is the cell surface. Acts as a multifunctional adhesin involved in direct interactions with host epithelial cells and host proteins. This chain is Surface-adhesin protein E (pe), found in Haemophilus influenzae (strain ATCC 51907 / DSM 11121 / KW20 / Rd).